Here is a 671-residue protein sequence, read N- to C-terminus: Bifunctional acetylxylan esterase/xylanase XynS20E (671 aa).

A signal peptide spans 1–19; that stretch reads MRLGVALSTIAVLLTATSA. The interval 54 to 279 is acetylxylan esterase; sequence QGAGRDIHVY…IQDIWDFVSQ (226 aa). Residue serine 152 is the Charge relay system of the active site. Asparagine 238 carries N-linked (GlcNAc...) asparagine glycosylation. Residues 285-328 form a disordered region; it reads PVSASGNGGGNTTPTNPSTGGNGNGNGGGNTTPTNPSTGGNGNG. A compositionally biased stretch (gly residues) spans 304–314; it reads GGNGNGNGGGN. CBM10 domains are found at residues 335–374 and 383–422; these read KCSS…CGCG and TCSA…CGCG. A glycan (N-linked (GlcNAc...) asparagine) is linked at asparagine 339. Residues asparagine 445 and asparagine 483 are each glycosylated (N-linked (GlcNAc...) asparagine). In terms of domain architecture, GH11 spans 461 to 661; it reads TVTSNKVGDI…NNGGTSGTAD (201 aa). Glutamate 555 acts as the Nucleophile in catalysis. Catalysis depends on glutamate 648, which acts as the Proton donor.

The protein in the N-terminal section; belongs to the axeA family. It in the C-terminal section; belongs to the glycosyl hydrolase 11 (cellulase G) family.

It is found in the secreted. It carries out the reaction Deacetylation of xylans and xylo-oligosaccharides.. The catalysed reaction is Endohydrolysis of (1-&gt;4)-beta-D-xylosidic linkages in xylans.. It functions in the pathway glycan degradation; xylan degradation. Its function is as follows. Bifunctional acetylxylan esterase/xylanase involved in the hydrolysis of xylan, a major structural heterogeneous polysaccharide found in plant biomass representing the second most abundant polysaccharide in the biosphere, after cellulose. Degrades xylan from acetylxylan, beechwood, birchwood, and oat spelt, and releases acetate from 4-methylumbelliferyl acetate and beta-D-xylose tetraacetate. No activity is observed against carboxy methyl cellulose, beta-glucan, p-nitrophenol acetate, p-nitrophenol laurate, p-nitrophenol myristate, p-nitrophenol, palmitate, or beta-naphthol acetate. In Neocallimastix patriciarum (Rumen fungus), this protein is Bifunctional acetylxylan esterase/xylanase XynS20E (xynS20E).